The chain runs to 317 residues: Acetyl-coenzyme A carboxylase carboxyl transferase subunit alpha (317 aa).

The CoA carboxyltransferase C-terminal domain maps to 39–293 (RLESKAAAAL…EEAIAEGLAG (255 aa)).

This sequence belongs to the AccA family. In terms of assembly, acetyl-CoA carboxylase is a heterohexamer composed of biotin carboxyl carrier protein (AccB), biotin carboxylase (AccC) and two subunits each of ACCase subunit alpha (AccA) and ACCase subunit beta (AccD).

It is found in the cytoplasm. It catalyses the reaction N(6)-carboxybiotinyl-L-lysyl-[protein] + acetyl-CoA = N(6)-biotinyl-L-lysyl-[protein] + malonyl-CoA. It participates in lipid metabolism; malonyl-CoA biosynthesis; malonyl-CoA from acetyl-CoA: step 1/1. Functionally, component of the acetyl coenzyme A carboxylase (ACC) complex. First, biotin carboxylase catalyzes the carboxylation of biotin on its carrier protein (BCCP) and then the CO(2) group is transferred by the carboxyltransferase to acetyl-CoA to form malonyl-CoA. The polypeptide is Acetyl-coenzyme A carboxylase carboxyl transferase subunit alpha (Methylobacterium sp. (strain 4-46)).